A 471-amino-acid chain; its full sequence is Glutamate--tRNA ligase (471 aa).

The 'HIGH' region motif lies at 9–19 (PSPTGYLHVGG). Cysteine 98, cysteine 100, cysteine 125, and histidine 127 together coordinate Zn(2+). Positions 237-241 (KLSKR) match the 'KMSKS' region motif. Lysine 240 is a binding site for ATP.

This sequence belongs to the class-I aminoacyl-tRNA synthetase family. Glutamate--tRNA ligase type 1 subfamily. As to quaternary structure, monomer. Requires Zn(2+) as cofactor.

It is found in the cytoplasm. It carries out the reaction tRNA(Glu) + L-glutamate + ATP = L-glutamyl-tRNA(Glu) + AMP + diphosphate. In terms of biological role, catalyzes the attachment of glutamate to tRNA(Glu) in a two-step reaction: glutamate is first activated by ATP to form Glu-AMP and then transferred to the acceptor end of tRNA(Glu). In Escherichia coli O9:H4 (strain HS), this protein is Glutamate--tRNA ligase.